Here is a 318-residue protein sequence, read N- to C-terminus: Type II restriction enzyme HaeIII (318 aa).

The enzyme catalyses Endonucleolytic cleavage of DNA to give specific double-stranded fragments with terminal 5'-phosphates.. A P subtype restriction enzyme that recognizes the double-stranded sequence 5'-GGCC-3' and cleaves after G-2. The protein is Type II restriction enzyme HaeIII (haeIIIR) of Haemophilus aegyptius.